Consider the following 89-residue polypeptide: Small ribosomal subunit protein uS15 (89 aa).

Residues 1-11 (MSITAERKAEV) are compositionally biased toward basic and acidic residues. Positions 1–24 (MSITAERKAEVIKTNAKKAGDTGS) are disordered.

It belongs to the universal ribosomal protein uS15 family. As to quaternary structure, part of the 30S ribosomal subunit. Forms a bridge to the 50S subunit in the 70S ribosome, contacting the 23S rRNA.

In terms of biological role, one of the primary rRNA binding proteins, it binds directly to 16S rRNA where it helps nucleate assembly of the platform of the 30S subunit by binding and bridging several RNA helices of the 16S rRNA. Forms an intersubunit bridge (bridge B4) with the 23S rRNA of the 50S subunit in the ribosome. This is Small ribosomal subunit protein uS15 from Afipia carboxidovorans (strain ATCC 49405 / DSM 1227 / KCTC 32145 / OM5) (Oligotropha carboxidovorans).